The primary structure comprises 86 residues: Probable protein BRICK1 (86 aa).

A coiled-coil region spans residues Glu47–Asn81.

Belongs to the BRK1 family. As to quaternary structure, binds SCAR.

The protein resides in the cytoplasm. It localises to the cytoskeleton. In terms of biological role, involved in regulation of actin and microtubule organization. Part of a WAVE complex that activates the Arp2/3 complex. The chain is Probable protein BRICK1 from Oryza sativa subsp. japonica (Rice).